A 229-amino-acid chain; its full sequence is MTKKKAFTPLPYLASIVFLPWWISFSFNKSLESWVIHWWNTSQPEAFLNDIQEKNVLEKFIELEELFLLDEMIKEYPKTHIQKFRIGIHKETIQLVKMHNEGHIHTFLQFSTNIISFAILSGYSILGNEELVVLNSWIREFLYNLSDTIKAFSILLLTDLCIGFHSPHGWELMIDFVYKDFGFSHNDQIISGLVSTFPVILDTIFKYWIFRYLNRVSPSLVVIYHSMND.

Helical transmembrane passes span phenylalanine 7–phenylalanine 27, isoleucine 114–leucine 134, isoleucine 154–isoleucine 174, and isoleucine 189–isoleucine 209.

This sequence belongs to the CemA family.

The protein resides in the plastid. Its subcellular location is the chloroplast inner membrane. The enzyme catalyses K(+)(in) + H(+)(out) = K(+)(out) + H(+)(in). Contributes to K(+)/H(+) antiport activity by supporting proton efflux to control proton extrusion and homeostasis in chloroplasts in a light-dependent manner to modulate photosynthesis. Prevents excessive induction of non-photochemical quenching (NPQ) under continuous-light conditions. Indirectly promotes efficient inorganic carbon uptake into chloroplasts. The protein is Potassium/proton antiporter CemA of Nandina domestica (Heavenly bamboo).